The primary structure comprises 92 residues: Small ribosomal subunit protein uS19 (92 aa).

It belongs to the universal ribosomal protein uS19 family.

Functionally, protein S19 forms a complex with S13 that binds strongly to the 16S ribosomal RNA. This Polynucleobacter asymbioticus (strain DSM 18221 / CIP 109841 / QLW-P1DMWA-1) (Polynucleobacter necessarius subsp. asymbioticus) protein is Small ribosomal subunit protein uS19.